We begin with the raw amino-acid sequence, 128 residues long: Small ribosomal subunit protein uS11 (128 aa).

This sequence belongs to the universal ribosomal protein uS11 family. As to quaternary structure, part of the 30S ribosomal subunit. Interacts with proteins S7 and S18. Binds to IF-3.

Located on the platform of the 30S subunit, it bridges several disparate RNA helices of the 16S rRNA. Forms part of the Shine-Dalgarno cleft in the 70S ribosome. The polypeptide is Small ribosomal subunit protein uS11 (Desulfatibacillum aliphaticivorans).